The following is a 592-amino-acid chain: Autophagy-related protein 22-1 (592 aa).

A run of 4 helical transmembrane segments spans residues 31–51 (YGWAAEVFVVCAMGSFLPITL), 108–128 (TASFALYTFSLSVLVQAVIII), 143–163 (LLIVFAFIGSIATMLFLVVVP), and 167–187 (LLGGLLAIISNTCFGASFVLL). Residue asparagine 213 is glycosylated (N-linked (GlcNAc...) asparagine). 8 helical membrane-spanning segments follow: residues 271-291 (IGIGYIGAVILQVISILVVVV), 301-321 (LVLFLIGLWWFVFTIPASLWL), 364-384 (IVIFLAAWFLLSDGIATVSGT), 398-418 (AALGLINVIVMLAGVFGAFSW), 433-453 (IIACIILFELIPLYGLLGFIP), 468-490 (MYPLGALYGLVMGGLSSYCRSFF), 502-524 (FYALYAITDKGSSIFGPAIVGAI), and 534-554 (AFVFLAVLIFVPLPLMLLVDV). Residues 572-592 (PQGSEYGAISDDQTTEDPIEE) are disordered.

This sequence belongs to the ATG22 family.

The protein localises to the vacuole membrane. Functionally, vacuolar effluxer which mediate the efflux of amino acids resulting from autophagic degradation. The release of autophagic amino acids allows the maintenance of protein synthesis and viability during nitrogen starvation. In Penicillium rubens (strain ATCC 28089 / DSM 1075 / NRRL 1951 / Wisconsin 54-1255) (Penicillium chrysogenum), this protein is Autophagy-related protein 22-1 (atg22-1).